Here is a 290-residue protein sequence, read N- to C-terminus: Ciliary microtubule inner protein 6 (290 aa).

The disordered stretch occupies residues 76–112 (ENQGDWWPHGKGLENPFQPPYDTKSTQRSDFKKPTCP). Mn regions lie at residues 128-160 (GIVP…ARKT) and 213-246 (SAES…IRVA). A disordered region spans residues 197–228 (SGSCSSEQSKKTEKGNSAESKMISPGLCRQNS).

The protein resides in the cell projection. It is found in the cilium. The sequence is that of Ciliary microtubule inner protein 6 (CIMIP6) from Bos taurus (Bovine).